A 535-amino-acid polypeptide reads, in one-letter code: SIR4-interacting protein SIF2 (535 aa).

One can recognise a LisH domain in the interval 4-36 (TSEELNYLIWRYCQEMGHEVSALALQDETRVLE). Positions 104–140 (EGRFTLETNSESNKAGEDGASTVERETQEDDTNSIDS) are disordered. Residues 130–140 (TQEDDTNSIDS) are compositionally biased toward acidic residues. Ser-137 is subject to Phosphoserine. WD repeat units lie at residues 155–186 (VKLDNIVSSTWNPLDESILAYGEKNSVARLAR), 218–248 (KTTNQVTCLAWSHDGNSIVTGVENGELRLWN), 259–289 (FHRAPIVSVKWNKDGTHIISMDVENVTILWN), 316–345 (GDGSLGVDVEWVDDDKFVIPGPKGAIFVYQ), 357–387 (GHHGPISVLEFNDTNKLLLSASDDGTLRIWH), 399–428 (GHSQSIVSASWVGDDKVISCSMDGSVRLWS), 440–470 (VDGVPIFAGRISQDGQKYAVAFMDGQVNVYD), and 503–534 (SQDNDYIFDLSWNCAGNKISVAYSLQEGSVVA).

As to quaternary structure, homotetramer. Interacts with SIR4 N-terminal domain. Interacts with a complex composed of SIN3 and RPD3. Identified in the Set3C complex with HOS2, HST1, SNT1, CPR1, HOS4/YIL112W and SET3.

The protein resides in the nucleus. Functionally, antagonizes telomeric silencing in yeast. May recruit SIR4 to non-telomeric sites or repression. This is SIR4-interacting protein SIF2 (SIF2) from Saccharomyces cerevisiae (strain ATCC 204508 / S288c) (Baker's yeast).